Reading from the N-terminus, the 238-residue chain is 2,3-bisphosphoglycerate-dependent phosphoglycerate mutase (238 aa).

Substrate contacts are provided by residues 8 to 15 (RHGQSEWN), 21 to 22 (TG), R60, 86 to 89 (ERHY), K97, 113 to 114 (RR), and 182 to 183 (GN). Residue H9 is the Tele-phosphohistidine intermediate of the active site. E86 (proton donor/acceptor) is an active-site residue.

Belongs to the phosphoglycerate mutase family. BPG-dependent PGAM subfamily. In terms of assembly, homodimer.

It catalyses the reaction (2R)-2-phosphoglycerate = (2R)-3-phosphoglycerate. The protein operates within carbohydrate degradation; glycolysis; pyruvate from D-glyceraldehyde 3-phosphate: step 3/5. Its function is as follows. Catalyzes the interconversion of 2-phosphoglycerate and 3-phosphoglycerate. This chain is 2,3-bisphosphoglycerate-dependent phosphoglycerate mutase, found in Pelagibacter ubique (strain HTCC1062).